Consider the following 367-residue polypeptide: MSDSQTLVVKLGTSVLTGGSRRLNRAHIVELVRQCAQLHAAGHRIVIVTSGAIAAGREHLGYPELPATIASKQLLAAVGQSRLIQLWEQLFSIYGIHIGQMLLTRADMEDRERFLNARDTLRALLDNNIVPVINENDAVATAEIKVGDNDNLSALAAILAGADKLLLLTDQQGLFTADPRTNPQAELIKDVYGIDDALRAIAGDSVSGLGTGGMGTKLQAADVACRAGIDTIIAAGSKPGVIGDVMAGISAGTRFHAQASPLENRKRWIFGAPPAGEITVDEGATSAILERGSSLLPKGIKSVTGNFSRGEVIRIRNQEGRDIAHGVTRYNSDALRRIAGHHSQQIDAILGYEYGPVAVHRDDMITR.

Lys-10 is a binding site for ATP. The substrate site is built by Ser-50, Asp-137, and Asn-149. ATP-binding positions include 169-170 (TD) and 211-217 (TGGMGTK). Positions 275–353 (AGEITVDEGA…QQIDAILGYE (79 aa)) constitute a PUA domain.

Belongs to the glutamate 5-kinase family.

Its subcellular location is the cytoplasm. The enzyme catalyses L-glutamate + ATP = L-glutamyl 5-phosphate + ADP. Its pathway is amino-acid biosynthesis; L-proline biosynthesis; L-glutamate 5-semialdehyde from L-glutamate: step 1/2. In terms of biological role, catalyzes the transfer of a phosphate group to glutamate to form L-glutamate 5-phosphate. The polypeptide is Glutamate 5-kinase (Citrobacter koseri (strain ATCC BAA-895 / CDC 4225-83 / SGSC4696)).